We begin with the raw amino-acid sequence, 251 residues long: Gamma-interferon-inducible lysosomal thiol reductase (251 aa).

The N-terminal stretch at 1 to 21 is a signal peptide; the sequence is MFGFRLSVLLFAVCSLSACSC. Residues 22–60 enclose the Saposin A-type domain; the sequence is MFVNSCKYPPSQWCDSRDIAAQCGVLEQCMKFNASPVTV. A disulfide bond links Cys-68 and Cys-71. N-linked (GlcNAc...) asparagine glycosylation occurs at Asn-108.

It belongs to the GILT family. Dimer; disulfide-linked. As to expression, highly expressed in spleen and kidney. Also detected at lower levels in liver, heart, brain, intestine and gill.

Its subcellular location is the secreted. The protein resides in the lysosome. Functionally, lysosomal thiol reductase that can reduce protein disulfide bonds. May facilitate the complete unfolding of proteins destined for lysosomal degradation. Plays an important role in antigen processing. The sequence is that of Gamma-interferon-inducible lysosomal thiol reductase from Carassius auratus (Goldfish).